The primary structure comprises 932 residues: MTSLYAPGAEDIRQRLRPFGFFFEKSLKDLIKGIRSHNETPEKLDQFFKQVLSECREEVNSPDLNSKTNAVLKLTYLEMYGFDMAWCNFHILEVMSSNKLQQKRVGYLAASQSFYKDSDILMLATNLLKKDLKYDGNNDVVKVGIALSGLSTIITPSLARDIADDLFTMLNSTRPYIRKKAITALFKVFLQYPEALRDNFDKFVSKLDDDDISVVSAAVSVICELSKKNPQPFIQLSPLLYEILVTIDNNWIIIRLLKLFTNLSQVEPKLRAKLLPKILELMESTVATSVIYESVNCIVKGNMLEEDDFETAMACLERLHTFCDSQDPNLRYISCILFYKIGKINTDFISRFDQLIIRLLSDVDVSIRSKAIELVEGIVDEDNLKAIVQTLMKQFVDEDVVILQTGSIVYEKSKRIPIIIPENYKIKMVNVIISICSADNYSSVNDFEWYNAVIMDLAMLCQDISDKSLGSKIGEQFRNLMIKVPSMREVTIANIIKLISNDNINKQLPTVLRECIWCLGEFSTLVENGNDLIKIMTENISYYSHSVQEVLILALVKVFSNWCNNFQEDKRFEIKMVLKELIEFFENLSYSSTFEVQERSVEVLEFLRLSLEALEEDTEGLPMLLSEVLPSFFNAYELAPIARGTQLKLAVDENLDLETPFLTKEAADELLDEQKSDAISDLMSDISMDEQVELKFVDDSDTSYEEKEKLDDFENPFEIEREKERMSNPYYLGEEDEERTKNSKDLLDLNEEESSDKKPETIRLNRTDNSLNSLSLSTTEISRKKKKGKKKNRVQVLSDEPVIEAAPKRKDAFQKPHDNHSTQNPLKKDKINLRMHSQLENFDFSNFGQSSNAGRGSQEEGNLRKEDELELSRLEANLIVKDEKDNLSDTEEVIVIKKKKKGKKSKSKNKLKTKAKNSPEPNEFLRDQSTDI.

The residue at position 2 (T2) is an N-acetylthreonine. 12 HEAT repeats span residues S157–E194, L196–Q231, F233–K269, L270–D307, E310–T346, D347–L384, A386–K425, K427–D466, V490–E527, N528–N564, K570–V601, and E602–L638. Phosphoserine occurs at positions 700 and 727. Positions E720 to E868 are disordered. 2 stretches are compositionally biased toward basic and acidic residues: residues E738–L747 and S755–R766. Phosphothreonine is present on T767. Residues T767 to T779 show a composition bias toward low complexity. Residues S770 and S773 each carry the phosphoserine modification. Positions R783–R793 are enriched in basic residues. Phosphoserine is present on S798. Residues A806–N832 are compositionally biased toward basic and acidic residues. Residues Q838 to R855 show a composition bias toward polar residues. Over residues S857–E868 the composition is skewed to basic and acidic residues. Residues Q858–L878 are a coiled coil. S888 bears the Phosphoserine mark. Over residues K897–A915 the composition is skewed to basic residues. The interval K897–I932 is disordered. S918 carries the phosphoserine modification. The span at E923 to I932 shows a compositional bias: basic and acidic residues.

Belongs to the adaptor complexes large subunit family. As to quaternary structure, adaptor protein complex 3 (AP-3) is a heterotetramer composed of 2 large adaptins (APL5 and APL6), a medium adaptin (APM3) and a small adaptin (APS3). Interacts with VPS41.

Its subcellular location is the golgi apparatus. It is found in the cytoplasmic vesicle. The protein resides in the clathrin-coated vesicle membrane. In terms of biological role, part of the AP-3 complex, an adaptor-related complex which is not clathrin-associated. The complex is associated with the Golgi region as well as more peripheral structures. It facilitates the budding of vesicles from the Golgi membrane and may be directly involved in trafficking to the vacuole. Required for the transport via the ALP pathway, which directs the transport of the cargo proteins PHO8 and VAM3 to the vacuole. The polypeptide is AP-3 complex subunit delta (APL5) (Saccharomyces cerevisiae (strain ATCC 204508 / S288c) (Baker's yeast)).